The chain runs to 287 residues: 4-hydroxybenzoate octaprenyltransferase (287 aa).

8 consecutive transmembrane segments (helical) span residues 19-39 (IGSL…ADGL), 42-62 (WHVL…GCVI), 95-115 (FFAV…TLTI), 136-156 (YLPQ…AYAA), 166-186 (WLLF…YAMV), 210-230 (IIGL…SQLA), 233-253 (GIYY…QWLI), and 264-284 (AFLN…ASVL).

It belongs to the UbiA prenyltransferase family. Mg(2+) is required as a cofactor.

It is found in the cell inner membrane. The enzyme catalyses all-trans-octaprenyl diphosphate + 4-hydroxybenzoate = 4-hydroxy-3-(all-trans-octaprenyl)benzoate + diphosphate. It participates in cofactor biosynthesis; ubiquinone biosynthesis. In terms of biological role, catalyzes the prenylation of para-hydroxybenzoate (PHB) with an all-trans polyprenyl group. Mediates the second step in the final reaction sequence of ubiquinone-8 (UQ-8) biosynthesis, which is the condensation of the polyisoprenoid side chain with PHB, generating the first membrane-bound Q intermediate 3-octaprenyl-4-hydroxybenzoate. In Aliivibrio fischeri (strain MJ11) (Vibrio fischeri), this protein is 4-hydroxybenzoate octaprenyltransferase.